The primary structure comprises 247 residues: PF03932 family protein CutC (247 aa).

It belongs to the CutC family.

It localises to the cytoplasm. The polypeptide is PF03932 family protein CutC (Enterobacter sp. (strain 638)).